A 796-amino-acid polypeptide reads, in one-letter code: Toll-like receptor 6 (796 aa).

The N-terminal stretch at 1–31 (MTKDKEPIVKSFHFVCLMIIIVGTRIQFSDG) is a signal peptide. The Extracellular segment spans residues 32–586 (NEFAVDKSKR…MSELSCNITL (555 aa)). LRR repeat units lie at residues 54–77 (TKVL…FLSE), 78–101 (LTVL…FNQD), 102–122 (LEYL…PIVS), 123–147 (FRHL…NLSQ), 148–168 (LNFL…PIAH), 169–196 (LHLS…ILNA), 197–219 (KTLH…SVNT), 220–250 (LGCL…RGST), 251–277 (LLNF…WPKP), 278–303 (VEYL…SKTT), 304–330 (LKAL…VFSE), 331–354 (MNIM…APST), 355–378 (FKFL…TLVK), 379–404 (LETL…DMPS), 405–429 (LEIL…WVES), 430–450 (IVVL…CLPP), 451–474 (RIKV…KLEA), 475–496 (LQEL…SFSS), and 497–520 (LSVL…SCQK). Cys-117 and Cys-139 are joined by a disulfide. N-linked (GlcNAc...) asparagine glycosylation occurs at Asn-144. N-linked (GlcNAc...) asparagine glycosylation is found at Asn-186 and Asn-214. Cys-235 and Cys-265 are oxidised to a cystine. N-linked (GlcNAc...) asparagine glycans are attached at residues Asn-253 and Asn-285. Cys-348 and Cys-373 are joined by a disulfide. Residue Asn-359 is glycosylated (N-linked (GlcNAc...) asparagine). N-linked (GlcNAc...) asparagine glycosylation is found at Asn-423 and Asn-434. Cys-424 and Cys-447 are joined by a disulfide. In terms of domain architecture, LRRCT spans 521–575 (MRSIKAGDNPFQCTCELREFVKNIDQVSSEVLEGWPDSYKCDYPESYRGSPLKDF). An N-linked (GlcNAc...) asparagine glycan is attached at Asn-583. The helical transmembrane segment at 587-607 (LIVTIGATMLVLAVTVTSLCI) threads the bilayer. Residues 608 to 796 (YLDLPWYLRM…LVTENNDVKS (189 aa)) lie on the Cytoplasmic side of the membrane. Residues 640–781 (LQFHAFISYS…LFWANIRAAF (142 aa)) enclose the TIR domain.

The protein belongs to the Toll-like receptor family. In terms of assembly, homodimer (via cytoplasmic TIR domain). Heterodimer with TLR2 via their respective extracellular domains. Binds MYD88 via their respective TIR domains. Interacts with CD36, following CD36 stimulation by oxLDL or amyloid-beta 42, and forms a heterodimer with TLR4. The trimeric complex is internalized and triggers inflammatory response. LYN kinase activity facilitates TLR4:TLR6 heterodimerization and signal initiation. The heterodimer TLR2:TLR6 interacts with CD14 and CD36 in response to triacylated lipopeptides. Detected in monocytes, CD11c+ immature dendritic cells, plasmacytoid pre-dendritic cells and dermal microvessel endothelial cells.

It localises to the cell membrane. The protein localises to the cytoplasmic vesicle. The protein resides in the phagosome membrane. It is found in the membrane raft. Its subcellular location is the golgi apparatus. Functionally, participates in the innate immune response to Gram-positive bacteria and fungi. Specifically recognizes diacylated and, to a lesser extent, triacylated lipopeptides. In response to diacylated lipopeptides, forms the activation cluster TLR2:TLR6:CD14:CD36, this cluster triggers signaling from the cell surface and subsequently is targeted to the Golgi in a lipid-raft dependent pathway. Acts via MYD88 and TRAF6, leading to NF-kappa-B activation, cytokine secretion and the inflammatory response. Recognizes mycoplasmal macrophage-activating lipopeptide-2kD (MALP-2), soluble tuberculosis factor (STF), phenol-soluble modulin (PSM) and B.burgdorferi outer surface protein A lipoprotein (OspA-L) cooperatively with TLR2. In complex with TLR4, promotes sterile inflammation in monocytes/macrophages in response to oxidized low-density lipoprotein (oxLDL) or amyloid-beta 42. In this context, the initial signal is provided by oxLDL- or amyloid-beta 42-binding to CD36. This event induces the formation of a heterodimer of TLR4 and TLR6, which is rapidly internalized and triggers inflammatory response, leading to the NF-kappa-B-dependent production of CXCL1, CXCL2 and CCL9 cytokines, via MYD88 signaling pathway, and CCL5 cytokine, via TICAM1 signaling pathway, as well as IL1B secretion. This Homo sapiens (Human) protein is Toll-like receptor 6 (TLR6).